We begin with the raw amino-acid sequence, 287 residues long: 2-dehydro-3-deoxyphosphooctonate aldolase (287 aa).

Belongs to the KdsA family.

It localises to the cytoplasm. It carries out the reaction D-arabinose 5-phosphate + phosphoenolpyruvate + H2O = 3-deoxy-alpha-D-manno-2-octulosonate-8-phosphate + phosphate. Its pathway is carbohydrate biosynthesis; 3-deoxy-D-manno-octulosonate biosynthesis; 3-deoxy-D-manno-octulosonate from D-ribulose 5-phosphate: step 2/3. It functions in the pathway bacterial outer membrane biogenesis; lipopolysaccharide biosynthesis. The protein is 2-dehydro-3-deoxyphosphooctonate aldolase of Nitrobacter hamburgensis (strain DSM 10229 / NCIMB 13809 / X14).